The sequence spans 299 residues: Protein LacX, plasmid (299 aa).

This Lactococcus lactis subsp. lactis (Streptococcus lactis) protein is Protein LacX, plasmid (lacX).